The following is a 1093-amino-acid chain: MGTGDFICISMTGGAPWGFRLQGGKEQKQPLQVAKIRNQSKASGSGLCEGDEVVSINGNPCADLTYPEVIKLMESITDSLQMLIKRPSSGISEALISENENKNLEHLTHGGYVESTTLQIRPATKTQCTEFFLAPVKTEVPLAENQRSGPDCAGSLKEETGPSYQRAPQMPDSQRGRVAEELILREKVEAVQPGPVVELQLSLSQERHKGASGPLVALPGAEKSKSPDPDPNLSHDRIVHINSIPTNEKADPFLRSSKIIQISSGRELRVIQESEAGDAGLPRVEVILDCSDRQKTEGCRLQAGKECVDSPVEGGQSEAPPSLVSFAVSSEGTEQGEDPRSEKDHSRPHKHRARHARLRRSESLSEKQVKEAKSKCKSIALLLTDAPNPNSKGVLMFKKRRRRARKYTLVSYGTGELEREADEEEEGDKEDTCEVAFLGASESEVDEELLSDVDDNTQVVNFDWDSGLVDIEKKLNRGDKMEMLPDTTGKGALMFAKRRERMDQITAQKEEDKVGGTPSREQDAAQTDGLRTTTSYQRKEEESVRTQSSVSKSYIEVSHGLGHVPQQNGFSGTSETANIQRMVPMNRTAKPFPGSVNQPATPFSPTRNMTSPIADFPAPPPYSAVTPPPDAFSRGVSSPIAGPAQPPPWPQPAPWSQPAFYDSSERIASRDERISVPAKRTGILQEAKRRSTTKPMFTFKEPKVSPNPELLSLLQNSEGKRGTGAGGDSGPEEDYLSLGAEACNFMQSSSAKQKTPPPVAPKPAVKSSSSQPVTPVSPVWSPGVAPTQPPAFPTSNPSKGTVVSSIKIAQPSYPPARPASTLNVAGPFKGPQAAVASQNYTPKPTVSTPTVNAVQPGAVGPSNELPGMSGRGAQLFAKRQSRMEKYVVDSDTVQAHAARAQSPTPSLPASWKYSSNVRAPPPVAYNPIHSPSYPLAALKSQPSAAQPSKMGKKKGKKPLNALDVMKHQPYQLNASLFTFQPPDAKDGLPQKSSVKVNSALAMKQALPPRPVNAASPTNVQASSVYSVPAYTSPPSFFAEASSPVSASPVPVGIPTSPKQESASSSYFVAPRPKFSAKKSGVTIQVWKPSVVEE.

Positions methionine 1–glutamate 180 are interaction with VPS18. The region spanning phenylalanine 6–serine 88 is the PDZ domain. 2 disordered regions span residues glutamate 144–glutamine 174 and alanine 211–leucine 233. Positions glutamate 222–leucine 233 are enriched in basic and acidic residues. A phosphoserine mark is found at serine 274, serine 310, serine 329, and serine 330. Residues serine 329 to valine 369 are disordered. Threonine 333 carries the post-translational modification Phosphothreonine. The span at serine 346 to leucine 358 shows a compositional bias: basic residues. A compositionally biased stretch (basic and acidic residues) spans arginine 359 to valine 369. Positions lysine 398 to lysine 406 match the Nuclear localization signal motif. Interaction with ACTN2 regions lie at residues methionine 481–serine 663, serine 664–alanine 924, and glutamine 901–glutamate 1093. Disordered regions lie at residues alanine 507–valine 803 and alanine 834–glycine 870. 2 F-actin binding regions span residues threonine 534–serine 663 and serine 664–valine 803. Phosphoserine is present on residues serine 548, serine 549, and serine 551. Composition is skewed to polar residues over residues proline 565–isoleucine 579 and serine 595–serine 611. The residue at position 604 (serine 604) is a Phosphoserine. The interval arginine 607–proline 811 is interaction with YWHAB. At threonine 610 the chain carries Phosphothreonine. Serine 611 is subject to Phosphoserine. The interval aspartate 615–threonine 626 is interaction with BAG3. Composition is skewed to pro residues over residues proline 617 to aspartate 630 and alanine 644 to tryptophan 655. A PPPY motif motif is present at residues proline 619–tyrosine 622. At tyrosine 622 the chain carries Phosphotyrosine. Threonine 626 is subject to Phosphothreonine. The segment covering serine 663–isoleucine 674 has biased composition (basic and acidic residues). An F-actin bundling activity region spans residues serine 664–asparagine 916. A phosphoserine mark is found at serine 705 and serine 729. The actin binding stretch occupies residues alanine 751 to alanine 900. Phosphothreonine occurs at positions 755 and 774. The segment covering lysine 762 to valine 784 has biased composition (low complexity). A phosphoserine mark is found at serine 777 and serine 781. 2 stretches are compositionally biased toward polar residues: residues proline 793–valine 803 and valine 835–alanine 853. Residues glutamine 810–glutamate 1093 are interaction with FLNC. Phosphoserine is present on residues serine 902, serine 906, and serine 910. Residues alanine 937 to lysine 956 form a disordered region. Positions leucine 1000–valine 1019 are interaction with ZYX. A Phosphoserine modification is found at serine 1015. Low complexity predominate over residues serine 1041–proline 1050. The disordered stretch occupies residues serine 1041–serine 1064. Residue serine 1056 is modified to Phosphoserine.

Belongs to the synaptopodin family. May self-associate in muscle cells under oxidative stress. Binds F-actin. Interacts with ACTN2; ACTN2 is proposed to anchor SYOP2 at Z lines in mature myocytes. Interacts with AKAP6, PPP3CA and CAMK2A. Interacts (phosphorylated form) with YWHAB; YWHAB competes with ACTN2 for interaction with SYNPO2. Interacts with KPNA2; mediating nuclear import of SYNOP2; dependent on interaction with YWHAB. Interacts with IPO13; may be implicated in SYNOP2 nuclear import. Interacts with ZYX, FLNC, ILK. Interacts with BAG3 (via WW 1 domain). May associate with the CASA complex consisting of HSPA8, HSPB8 and BAG3. Interacts with VPS18. Post-translationally, phosphorylated by PKA, and by CaMK2 at multiple sites. Dephosphorylated by calcineurin; abrogating interaction with YWHAB and impairing nuclear import. Phosphorylated by ILK. As to expression, expressed in heart muscle. Isoform 5 is specifically expressed in skeletal muscle.

Its subcellular location is the nucleus. It is found in the cytoplasm. It localises to the cytoskeleton. The protein resides in the myofibril. The protein localises to the sarcomere. Its subcellular location is the z line. It is found in the cell junction. It localises to the focal adhesion. In terms of biological role, has an actin-binding and actin-bundling activity. Can induce the formation of F-actin networks in an isoform-specific manner. At the sarcomeric Z lines is proposed to act as adapter protein that links nascent myofibers to the sarcolemma via ZYX and may play a role in early assembly and stabilization of the Z lines. Involved in autophagosome formation. May play a role in chaperone-assisted selective autophagy (CASA) involved in Z lines maintenance in striated muscle under mechanical tension; may link the client-processing CASA chaperone machinery to a membrane-tethering and fusion complex providing autophagosome membranes. Involved in regulation of cell migration. May be a tumor suppressor. Its function is as follows. Involved in regulation of cell migration. Can induce formation of thick, irregular actin bundles in the cell body. Functionally, involved in regulation of cell migration. Can induce long, well-organized actin bundles frequently orientated in parallel along the long axis of the cell showing characteristics of contractile ventral stress fibers. Involved in regulation of cell migration. Can induce an amorphous actin meshwork throughout the cell body containing a mixture of long and short, randomly organized thick and thin actin bundles. In terms of biological role, can induce long, well-organized actin bundles frequently orientated in parallel along the long axis of the cell showing characteristics of contractile ventral stress fibers. Its function is as follows. Involved in regulation of cell migration in part dependent on the Rho-ROCK cascade; can promote formation of nascent focal adhesions, actin bundles at the leading cell edge and lamellipodia. Can induce formation of thick, irregular actin bundles in the cell body; the induced actin network is associated with enhanced cell migration in vitro. The protein is Synaptopodin-2 (SYNPO2) of Homo sapiens (Human).